Consider the following 287-residue polypeptide: Large ribosomal subunit protein uL2 (287 aa).

Residues 221–287 (RGSVMNPCDH…SKRSRGGRDS (67 aa)) are disordered. Positions 258-287 (KTRKKNKPSNKLVVRRRRRISKRSRGGRDS) are enriched in basic residues.

It belongs to the universal ribosomal protein uL2 family. In terms of assembly, part of the 50S ribosomal subunit. Forms a bridge to the 30S subunit in the 70S ribosome.

One of the primary rRNA binding proteins. Required for association of the 30S and 50S subunits to form the 70S ribosome, for tRNA binding and peptide bond formation. It has been suggested to have peptidyltransferase activity; this is somewhat controversial. Makes several contacts with the 16S rRNA in the 70S ribosome. The protein is Large ribosomal subunit protein uL2 of Prochlorococcus marinus (strain MIT 9301).